The sequence spans 628 residues: Zinc finger protein 555 (628 aa).

A KRAB domain is found at 4 to 77 (VVFEDVAVDF…ESKIATFTRN (74 aa)). The C2H2-type 1; degenerate zinc finger occupies 172 to 194 (YQCQECGQAYSCRSHLRMHVRTH). 14 consecutive C2H2-type zinc fingers follow at residues 200–222 (YVCK…VRIH), 228–250 (YECK…LRSH), 256–278 (YKCK…TITH), 284–306 (YKCK…MISH), 312–334 (HKCK…MITH), 340–362 (YECK…ERIH), 368–390 (YECK…ERTH), 396–418 (YECN…MRVH), 424–446 (YECK…MRTH), 452–474 (YECK…VRMH), 480–502 (YECK…MRRH), 508–530 (YKCK…VRTH), 536–558 (YECK…MRLH), and 564–586 (YQCK…VRIH).

The protein belongs to the krueppel C2H2-type zinc-finger protein family.

Its subcellular location is the nucleus. Its function is as follows. May be involved in transcriptional regulation. This chain is Zinc finger protein 555 (ZNF555), found in Homo sapiens (Human).